We begin with the raw amino-acid sequence, 229 residues long: E3 ubiquitin-protein ligase RNF114 (229 aa).

A disordered region spans residues 1–23 (MAAAQPESRDGAAQSAKPASETD). An RING-type zinc finger spans residues 30–69 (CPVCLEVFEKPVQVPCGHVFCSACLQECLKPKKPVCGVCR). Residues Cys-92 and Cys-95 each coordinate Zn(2+). Residues 92-111 (CHGCRKNFILSKIRAHVTSC) form a C2HC RNF-type zinc finger. Lys-103 bears the N6-acetyllysine mark. 2 residues coordinate Zn(2+): His-107 and Cys-111. An N6-acetyllysine modification is found at Lys-113.

In terms of assembly, interacts with XAF1, the interaction increases XAF1 stability and proapoptotic effects, and may regulate IFN signaling. In terms of processing, autoubiquitinated. Polyubiquitinated in the presence of E2 enzymes UBE2D1, UBE2D2 and UBE2D3, but only monoubiquitinated in the presence of UBE2E1.

The protein resides in the cytoplasm. Its subcellular location is the nucleus. It catalyses the reaction S-ubiquitinyl-[E2 ubiquitin-conjugating enzyme]-L-cysteine + [acceptor protein]-L-lysine = [E2 ubiquitin-conjugating enzyme]-L-cysteine + N(6)-ubiquitinyl-[acceptor protein]-L-lysine.. Its pathway is protein modification; protein ubiquitination. Its function is as follows. E3 ubiquitin-protein ligase that promotes the ubiquitination of various substrates. In turn, participates in the regulation of many biological processes including cell cycle, apoptosis, osteoclastogenesis as well as innate or adaptive immunity. Acts as negative regulator of NF-kappa-B-dependent transcription by promoting the ubiquitination and stabilization of the NF-kappa-B inhibitor TNFAIP3. May promote the ubiquitination of TRAF6 as well. Also acts as a negative regulator of T-cell activation. Inhibits cellular dsRNA responses and interferon production by targeting MAVS component for proteasomal degradation. Ubiquitinates the CDK inhibitor CDKN1A leading to its degradationand probably also CDKN1B and CDKN1C. This activity stimulates cell cycle G1-to-S phase transition and suppresses cellular senescence. May play a role in spermatogenesis. This Mus musculus (Mouse) protein is E3 ubiquitin-protein ligase RNF114 (Rnf114).